A 217-amino-acid polypeptide reads, in one-letter code: 3,4-dihydroxy-2-butanone 4-phosphate synthase (217 aa).

D-ribulose 5-phosphate-binding positions include 37–38, Asp-42, 150–154, and Glu-174; these read RE and RGGHT. Glu-38 is a binding site for Mg(2+). His-153 lines the Mg(2+) pocket.

This sequence belongs to the DHBP synthase family. In terms of assembly, homodimer. Requires Mg(2+) as cofactor. Mn(2+) is required as a cofactor.

It carries out the reaction D-ribulose 5-phosphate = (2S)-2-hydroxy-3-oxobutyl phosphate + formate + H(+). Its pathway is cofactor biosynthesis; riboflavin biosynthesis; 2-hydroxy-3-oxobutyl phosphate from D-ribulose 5-phosphate: step 1/1. Catalyzes the conversion of D-ribulose 5-phosphate to formate and 3,4-dihydroxy-2-butanone 4-phosphate. The protein is 3,4-dihydroxy-2-butanone 4-phosphate synthase of Sodalis glossinidius (strain morsitans).